A 412-amino-acid polypeptide reads, in one-letter code: Probable ribonuclease FAU-1 (412 aa).

The protein belongs to the FAU-1 family.

Its function is as follows. Probable RNase involved in rRNA stability through maturation and/or degradation of precursor rRNAs. Binds to RNA in loop regions with AU-rich sequences. In Sulfurisphaera tokodaii (strain DSM 16993 / JCM 10545 / NBRC 100140 / 7) (Sulfolobus tokodaii), this protein is Probable ribonuclease FAU-1.